Reading from the N-terminus, the 314-residue chain is Caspase-like protein (314 aa).

The protein belongs to the peptidase C14A family.

Functionally, may be involved in viral replication. The chain is Caspase-like protein from Heliothis virescens ascovirus 3e (HvAV-3e).